A 151-amino-acid chain; its full sequence is UPF0756 membrane protein Dred_1676 (151 aa).

4 helical membrane passes run 9 to 29, 47 to 67, 75 to 95, and 111 to 131; these read VILLLIGLVAQSNLIAICASV, THGLELGLLFLLLSILVPIAT, LLYNVSSLPGFLSIVGGILAT, and IIFGLIVGSVIGIIFFNGQPV.

The protein belongs to the UPF0756 family.

It is found in the cell membrane. In Desulforamulus reducens (strain ATCC BAA-1160 / DSM 100696 / MI-1) (Desulfotomaculum reducens), this protein is UPF0756 membrane protein Dred_1676.